The chain runs to 441 residues: Glutamate--tRNA ligase 2 (441 aa).

A 'HIGH' region motif is present at residues 9–19 (PSPTGYIHVGN). Positions 239 to 243 (ALSKR) match the 'KMSKS' region motif. Lys-242 lines the ATP pocket.

This sequence belongs to the class-I aminoacyl-tRNA synthetase family. Glutamate--tRNA ligase type 1 subfamily. In terms of assembly, monomer.

It is found in the cytoplasm. The enzyme catalyses tRNA(Glu) + L-glutamate + ATP = L-glutamyl-tRNA(Glu) + AMP + diphosphate. Catalyzes the attachment of glutamate to tRNA(Glu) in a two-step reaction: glutamate is first activated by ATP to form Glu-AMP and then transferred to the acceptor end of tRNA(Glu). The chain is Glutamate--tRNA ligase 2 from Cereibacter sphaeroides (strain ATCC 17029 / ATH 2.4.9) (Rhodobacter sphaeroides).